A 382-amino-acid polypeptide reads, in one-letter code: Histidine biosynthesis bifunctional protein HisB (382 aa).

The interval 1–190 (MQKIVFIDRD…EIYEFLRLPA (190 aa)) is histidinol-phosphatase. Asp-8 serves as the catalytic Nucleophile. Mg(2+) is bound by residues Asp-8, Asp-10, and Asp-129. The Proton donor role is filled by Asp-10. The tract at residues 191–382 (RTALVERNTK…DNLPSTKGVL (192 aa)) is imidazoleglycerol-phosphate dehydratase.

It in the N-terminal section; belongs to the histidinol-phosphatase family. This sequence in the C-terminal section; belongs to the imidazoleglycerol-phosphate dehydratase family. Mg(2+) is required as a cofactor.

The protein resides in the cytoplasm. The catalysed reaction is D-erythro-1-(imidazol-4-yl)glycerol 3-phosphate = 3-(imidazol-4-yl)-2-oxopropyl phosphate + H2O. The enzyme catalyses L-histidinol phosphate + H2O = L-histidinol + phosphate. Its pathway is amino-acid biosynthesis; L-histidine biosynthesis; L-histidine from 5-phospho-alpha-D-ribose 1-diphosphate: step 6/9. It functions in the pathway amino-acid biosynthesis; L-histidine biosynthesis; L-histidine from 5-phospho-alpha-D-ribose 1-diphosphate: step 8/9. The protein is Histidine biosynthesis bifunctional protein HisB of Spirosoma linguale (strain ATCC 33905 / DSM 74 / LMG 10896 / Claus 1).